A 79-amino-acid chain; its full sequence is Sulfur carrier protein TusA (79 aa).

Cys17 (cysteine persulfide intermediate) is an active-site residue.

This sequence belongs to the sulfur carrier protein TusA family.

It localises to the cytoplasm. Its function is as follows. Sulfur carrier protein which probably makes part of a sulfur-relay system. This chain is Sulfur carrier protein TusA, found in Idiomarina loihiensis (strain ATCC BAA-735 / DSM 15497 / L2-TR).